The sequence spans 732 residues: uncharacterized protein (732 aa).

Belongs to the mimivirus L137 family.

This is an uncharacterized protein from Acanthamoeba polyphaga mimivirus (APMV).